The primary structure comprises 400 residues: Putative F-box protein At5g41510 (400 aa).

One can recognise an F-box domain in the interval 2–47; sequence ATMISNLPRDLIEEIFSRVPLTSMKAVRLTCKSWNNLSKSESFTKV.

This chain is Putative F-box protein At5g41510, found in Arabidopsis thaliana (Mouse-ear cress).